A 298-amino-acid polypeptide reads, in one-letter code: 4-hydroxy-tetrahydrodipicolinate synthase (298 aa).

T51 is a binding site for pyruvate. Residue Y139 is the Proton donor/acceptor of the active site. K167 serves as the catalytic Schiff-base intermediate with substrate. I209 serves as a coordination point for pyruvate.

The protein belongs to the DapA family. Homotetramer; dimer of dimers.

It localises to the cytoplasm. The enzyme catalyses L-aspartate 4-semialdehyde + pyruvate = (2S,4S)-4-hydroxy-2,3,4,5-tetrahydrodipicolinate + H2O + H(+). Its pathway is amino-acid biosynthesis; L-lysine biosynthesis via DAP pathway; (S)-tetrahydrodipicolinate from L-aspartate: step 3/4. Catalyzes the condensation of (S)-aspartate-beta-semialdehyde [(S)-ASA] and pyruvate to 4-hydroxy-tetrahydrodipicolinate (HTPA). In Haemophilus influenzae (strain 86-028NP), this protein is 4-hydroxy-tetrahydrodipicolinate synthase.